The following is a 195-amino-acid chain: 7-methyl-GTP pyrophosphatase (195 aa).

Asp-70 (proton acceptor) is an active-site residue.

Belongs to the Maf family. YceF subfamily. It depends on a divalent metal cation as a cofactor.

Its subcellular location is the cytoplasm. The enzyme catalyses N(7)-methyl-GTP + H2O = N(7)-methyl-GMP + diphosphate + H(+). Functionally, nucleoside triphosphate pyrophosphatase that hydrolyzes 7-methyl-GTP (m(7)GTP). May have a dual role in cell division arrest and in preventing the incorporation of modified nucleotides into cellular nucleic acids. The chain is 7-methyl-GTP pyrophosphatase from Shewanella sp. (strain MR-7).